Reading from the N-terminus, the 1009-residue chain is DNA ligase 3 (1009 aa).

The N-terminal 42 residues, Met-1–Asp-42, are a transit peptide targeting the mitochondrion. The PARP-type zinc-finger motif lies at Phe-93 to Ser-185. Zn(2+)-binding residues include Cys-105, Cys-108, His-139, and Cys-142. Residues Ser-210, Ser-216, Ser-227, and Ser-242 each carry the phosphoserine modification. The disordered stretch occupies residues Arg-224–Pro-256. Positions Pro-240–Ser-252 are enriched in low complexity. 4 interaction with DNA regions span residues Pro-277–Asn-280, Val-318–Asp-323, Thr-388–Asp-391, and Lys-421–Lys-427. An ATP-binding site is contributed by Glu-506. The active-site N6-AMP-lysine intermediate is the Lys-508. Arg-513 and Arg-528 together coordinate ATP. 2 residues coordinate Mg(2+): Glu-560 and Glu-655. Lys-660, Arg-671, and Lys-675 together coordinate ATP. Residues Ala-842–Val-917 form a disordered region. Low complexity-rich tracts occupy residues Glu-845 to Ser-854 and Ser-863 to Thr-877. The span at Leu-884 to Lys-898 shows a compositional bias: polar residues. The residue at position 913 (Ser-913) is a Phosphoserine. The BRCT domain maps to Val-933–Cys-1009.

It belongs to the ATP-dependent DNA ligase family. As to quaternary structure, isoform 3 interacts (via BRCT domain) with the nuclear DNA-repair protein XRCC1. Interacts with POLG. Interacts with POLB. Mg(2+) is required as a cofactor. In terms of tissue distribution, testis, thymus, prostate and heart.

The protein resides in the mitochondrion. Its subcellular location is the nucleus. The enzyme catalyses ATP + (deoxyribonucleotide)n-3'-hydroxyl + 5'-phospho-(deoxyribonucleotide)m = (deoxyribonucleotide)n+m + AMP + diphosphate.. Functionally, isoform 3 functions as a heterodimer with DNA-repair protein XRCC1 in the nucleus and can correct defective DNA strand-break repair and sister chromatid exchange following treatment with ionizing radiation and alkylating agents. Isoform 1 is targeted to mitochondria, where it functions as a DNA ligase in mitochondrial base-excision DNA repair. This is DNA ligase 3 (LIG3) from Homo sapiens (Human).